The primary structure comprises 503 residues: NAD(P)H-quinone oxidoreductase chain 4, chloroplastic (503 aa).

14 helical membrane passes run 3–23 (FFPWLTIIVVFPIFAGSIVFF), 37–57 (LCICILELLITTYTFCFHFQV), 84–104 (GLSVGPILLTGFITTLATLAA), 113–130 (LFHFLMLAMYSGQIGLFA), 134–154 (LFLFFIMWELELIPVYLLLSM), 167–187 (FILYTAGGSIFLLMGVLGLTL), 208–228 (ALEIIFYIGFFIAFAVKSPIL), 242–262 (HYSTCMLLAGILLKMGAYGLI), 274–294 (SLFSPYLVIVGTIQMIYAALT), 305–325 (IAYSSVSHMGFIIIGIGSMTD), 330–350 (GALLQIISHGFIGAALFFLAG), 385–405 (SLALPGMSGFVAELLVFFGII), 416–436 (ILISFVMAIGIILTPIYSLSM), and 462–482 (LFLSISILLPVIGIGMYPDFV).

It belongs to the complex I subunit 4 family.

It is found in the plastid. Its subcellular location is the chloroplast thylakoid membrane. It carries out the reaction a plastoquinone + NADH + (n+1) H(+)(in) = a plastoquinol + NAD(+) + n H(+)(out). It catalyses the reaction a plastoquinone + NADPH + (n+1) H(+)(in) = a plastoquinol + NADP(+) + n H(+)(out). This Ipomoea purpurea (Common morning glory) protein is NAD(P)H-quinone oxidoreductase chain 4, chloroplastic.